The following is a 229-amino-acid chain: Potassium/proton antiporter CemA (229 aa).

The next 4 helical transmembrane spans lie at 7 to 27, 114 to 134, 154 to 174, and 189 to 209; these read FTPL…SLSF, IICF…LVIL, ILLL…ELMV, and IISG…KYWI.

It belongs to the CemA family.

It is found in the plastid. The protein resides in the chloroplast inner membrane. The catalysed reaction is K(+)(in) + H(+)(out) = K(+)(out) + H(+)(in). Functionally, contributes to K(+)/H(+) antiport activity by supporting proton efflux to control proton extrusion and homeostasis in chloroplasts in a light-dependent manner to modulate photosynthesis. Prevents excessive induction of non-photochemical quenching (NPQ) under continuous-light conditions. Indirectly promotes efficient inorganic carbon uptake into chloroplasts. The protein is Potassium/proton antiporter CemA of Coffea arabica (Arabian coffee).